Reading from the N-terminus, the 213-residue chain is Putative thymidylate kinase 251L (213 aa).

Residue 21-28 coordinates ATP; that stretch reads GCDKTGKS.

It belongs to the thymidylate kinase family.

It catalyses the reaction dTMP + ATP = dTDP + ADP. It participates in pyrimidine metabolism; dTTP biosynthesis. Its function is as follows. Catalyzes the conversion of dTMP to dTDP. The chain is Putative thymidylate kinase 251L from Acheta domesticus (House cricket).